The following is a 282-amino-acid chain: Formamidopyrimidine-DNA glycosylase (282 aa).

The active-site Schiff-base intermediate with DNA is Pro-2. Glu-3 (proton donor) is an active-site residue. Lys-61 acts as the Proton donor; for beta-elimination activity in catalysis. DNA contacts are provided by His-93, Arg-112, and Lys-158. An FPG-type zinc finger spans residues 244–278 (DAYGREGEPCRRCGAIMRRDKFMNRSSFYCPRCQP). The active-site Proton donor; for delta-elimination activity is the Arg-268.

This sequence belongs to the FPG family. Monomer. Zn(2+) serves as cofactor.

The enzyme catalyses Hydrolysis of DNA containing ring-opened 7-methylguanine residues, releasing 2,6-diamino-4-hydroxy-5-(N-methyl)formamidopyrimidine.. It catalyses the reaction 2'-deoxyribonucleotide-(2'-deoxyribose 5'-phosphate)-2'-deoxyribonucleotide-DNA = a 3'-end 2'-deoxyribonucleotide-(2,3-dehydro-2,3-deoxyribose 5'-phosphate)-DNA + a 5'-end 5'-phospho-2'-deoxyribonucleoside-DNA + H(+). In terms of biological role, involved in base excision repair of DNA damaged by oxidation or by mutagenic agents. Acts as a DNA glycosylase that recognizes and removes damaged bases. Has a preference for oxidized purines, such as 7,8-dihydro-8-oxoguanine (8-oxoG). Has AP (apurinic/apyrimidinic) lyase activity and introduces nicks in the DNA strand. Cleaves the DNA backbone by beta-delta elimination to generate a single-strand break at the site of the removed base with both 3'- and 5'-phosphates. The protein is Formamidopyrimidine-DNA glycosylase of Mycolicibacterium gilvum (strain PYR-GCK) (Mycobacterium gilvum (strain PYR-GCK)).